The chain runs to 106 residues: Ferredoxin (106 aa).

[3Fe-4S] cluster contacts are provided by cysteine 9 and cysteine 17. 4 residues coordinate [4Fe-4S] cluster: cysteine 21, cysteine 40, cysteine 43, and cysteine 46. Residues 31-60 enclose the 4Fe-4S ferredoxin-type domain; sequence RMLYIHPDECVDCGACEPVCPVEAIYYEDD. Cysteine 50 contributes to the [3Fe-4S] cluster binding site. The tract at residues 84–106 is disordered; that stretch reads GAAKVGKVDRDVEPVSSLPPQGE.

[4Fe-4S] cluster is required as a cofactor. Requires [3Fe-4S] cluster as cofactor.

Functionally, ferredoxins are iron-sulfur proteins that transfer electrons in a wide variety of metabolic reactions. The sequence is that of Ferredoxin (fdxA) from Saccharopolyspora erythraea (Streptomyces erythraeus).